We begin with the raw amino-acid sequence, 571 residues long: Hemagglutinin-neuraminidase (571 aa).

Residues 1 to 26 lie on the Intravirion side of the membrane; sequence MDRAVSRVALENEEREAKNTWRFVFR. The helical transmembrane segment at 27–47 threads the bilayer; sequence IAILLLIVITLAISAAALVYS. The Virion surface segment spans residues 48 to 571; the sequence is MEASTPGDLV…LVEILKNDGV (524 aa). Residue asparagine 119 is glycosylated (N-linked (GlcNAc...) asparagine; by host). The interval 124–152 is important for interaction with fusion/F protein; the sequence is GAPVHDPDYIGGIGKELIVDDASDVTSFY. Intrachain disulfides connect cysteine 172–cysteine 196, cysteine 186–cysteine 247, and cysteine 238–cysteine 251. An involved in neuraminidase activity region spans residues 234–239; sequence NRKSCS. Asparagine 341 and asparagine 433 each carry an N-linked (GlcNAc...) asparagine; by host glycan. 2 disulfide bridges follow: cysteine 344-cysteine 461 and cysteine 455-cysteine 465. N-linked (GlcNAc...) asparagine; by host glycans are attached at residues asparagine 481, asparagine 508, and asparagine 538.

The protein belongs to the paramyxoviruses hemagglutinin-neuraminidase family. In terms of assembly, homotetramer; composed of disulfide-linked homodimers. Interacts with F protein trimer. Interacts with host CG-1B; this interaction inhibits viral adsorption and replication rather than internalization.

The protein resides in the virion membrane. It localises to the host cell membrane. The enzyme catalyses Hydrolysis of alpha-(2-&gt;3)-, alpha-(2-&gt;6)-, alpha-(2-&gt;8)- glycosidic linkages of terminal sialic acid residues in oligosaccharides, glycoproteins, glycolipids, colominic acid and synthetic substrates.. Mediates the viral entry into the host cell together with fusion/F protein. Attaches the virus to sialic acid-containing cell receptors and thereby initiates infection. Binding of HN protein to the receptor induces a conformational change that allows the F protein to trigger virion/cell membranes fusion. In terms of biological role, neuraminidase activity ensures the efficient spread of the virus by dissociating the mature virions from the neuraminic acid containing glycoproteins. This Gallus gallus (Chicken) protein is Hemagglutinin-neuraminidase (HN).